The chain runs to 644 residues: Exoribonuclease 2 (644 aa).

The region spanning 189–516 is the RNB domain; that stretch reads RQDLTALNFV…NHRLLKAAIK (328 aa). In terms of domain architecture, S1 motif spans 561–643; it reads DTRFAAEIID…ETRSIIARPV (83 aa).

The protein belongs to the RNR ribonuclease family. RNase II subfamily.

The protein resides in the cytoplasm. It carries out the reaction Exonucleolytic cleavage in the 3'- to 5'-direction to yield nucleoside 5'-phosphates.. Its function is as follows. Involved in mRNA degradation. Hydrolyzes single-stranded polyribonucleotides processively in the 3' to 5' direction. The protein is Exoribonuclease 2 of Escherichia fergusonii (strain ATCC 35469 / DSM 13698 / CCUG 18766 / IAM 14443 / JCM 21226 / LMG 7866 / NBRC 102419 / NCTC 12128 / CDC 0568-73).